Reading from the N-terminus, the 419-residue chain is MPLNANFPSKNYDYDYDLQPCFFFLEEENFYHQQSRLQPPAPSEDIWKKFELLPTPPLSPSRRSSQSSLFPSTADQLEMVTEFLGGDMVNQSFICEADDEALLKSIVIQDCMWSGFSAAAKLEKVVSEKLASYQASRKESALSSSSPCQSQPPPSPLKSPSCHGSLSLGGTHRSSHGFLQDPSSDCVDPSVVFPYPLNDSISNASSPCQDLILETPPISSNSSSSESEEEPEDEDEDCDEEEEIDVVTVEKRQSASKRVESSSHSQPSRPHYSPLVLKRCHVPIHQHNYAASPSTKVDYVSSKRAKLESNIRVLKQISNNRKCASPRSSDSEENDKRKTHNVLERQRRNELKLSFFALRDQVPEVASNEKAPKVVILKKATEYAISLQEDERRLIRETEQLKYRKEQLKQRLQQLRNFV.

Positions E78 to G86 match the 9aaTAD motif. Disordered regions lie at residues A141 to L166, S206 to P274, and N319 to E344. Residues E226 to D245 are compositionally biased toward acidic residues. Over residues T248 to S261 the composition is skewed to basic and acidic residues. The span at N319–S328 shows a compositional bias: polar residues. Residues D335–L387 form the bHLH domain. The segment at L387–L415 is leucine-zipper.

As to quaternary structure, efficient DNA binding requires dimerization with another bHLH protein. Binds DNA as a heterodimer with MAX.

It localises to the nucleus. In terms of biological role, transcription factor that binds DNA in a non-specific manner, yet also specifically recognizes the core sequence 5'-CAC[GA]TG-3'. Activates the transcription of growth-related genes. In Xenopus laevis (African clawed frog), this protein is Transcriptional regulator Myc-A (myc-a).